The chain runs to 1231 residues: Protein FAM193A (1231 aa).

A coiled-coil region spans residues 106–142 (CTEDMYSTLLQRYQRSEEELRKVAEEWLECQKRIDAY). Residues 249–272 (DYLSEMRPPSVSSASSGSGSSSPI) form a disordered region. The segment covering 258–270 (SVSSASSGSGSSS) has biased composition (low complexity). S293 bears the Phosphoserine mark. 5 disordered regions span residues 331–405 (NGGG…QAEQ), 633–703 (QSSS…APSF), 719–789 (SFCP…NQKE), 826–845 (LTKRKEEQPKKMEQISEREG), and 860–1174 (NSSE…SSLD). Residues 355–365 (EADDEDADGES) are compositionally biased toward acidic residues. Position 648 is a phosphoserine (S648). The span at 676 to 691 (LAPLPALSPSALSPAS) shows a compositional bias: low complexity. The segment covering 761-773 (QQDDGDESADEDS) has biased composition (acidic residues). Residues 776–785 (EHSSSTSTST) show a composition bias toward low complexity. The span at 872-881 (AAKRARHKQR) shows a compositional bias: basic residues. Residues 877-973 (RHKQRKLEEK…ATESISNSEN (97 aa)) adopt a coiled-coil conformation. A compositionally biased stretch (basic and acidic residues) spans 882 to 909 (KLEEKARLEAEARAREHLHHQEEQKQRE). The span at 910–920 (EEEDEEEEDEE) shows a compositional bias: acidic residues. Basic and acidic residues predominate over residues 921–935 (QHFKEEFQRLQELQK). Residues 937 to 946 (RAAKKKKKDR) are compositionally biased toward basic residues. Polar residues predominate over residues 962 to 979 (QAATESISNSENIHNGSL). Phosphoserine is present on residues S1136 and S1151. Residues 1156–1166 (GKNKKNKKKKG) show a composition bias toward basic residues.

It belongs to the FAM193 family.

The sequence is that of Protein FAM193A (Fam193a) from Mus musculus (Mouse).